Here is a 31-residue protein sequence, read N- to C-terminus: Cycloviolacin-O14 (31 aa).

The segment at residues 1–31 is a cross-link (cyclopeptide (Gly-Asn)); the sequence is GSIPACGESCFKGKCYTPGCSCSKYPLCAKN. 3 disulfide bridges follow: cysteine 6-cysteine 20, cysteine 10-cysteine 22, and cysteine 15-cysteine 28.

Post-translationally, this is a cyclic peptide. In terms of tissue distribution, expressed in leaves and petioles but not in petals, roots and runners (at protein level).

Its function is as follows. Probably participates in a plant defense mechanism. Has hemolytic activity. This Viola odorata (Sweet violet) protein is Cycloviolacin-O14.